We begin with the raw amino-acid sequence, 534 residues long: Glycerophosphodiester transporter GIT2 (534 aa).

A run of 12 helical transmembrane segments spans residues 63 to 83, 96 to 116, 135 to 155, 163 to 183, 202 to 222, 230 to 250, 289 to 309, 322 to 342, 350 to 370, 377 to 397, 417 to 437, and 453 to 473; these read GAGLFADGYVNNSIGIVMACL, AISNIGSIGFVGTVVGQLSFG, LIAFTLLCAVGSWGTTIQGFF, FCLGVAIGAEYPTSSVIASEF, FMIDFGFVVSAFVPFVLLWIF, LWRVSIGLGAILPTALFFIRL, MIWFIYNFSVYSFGTFNAIIL, WGWSVVFNLFYIPGSFLGAFS, LTLAIGVGLQGIIGFIMSACL, VAAFTVVFGIFATLGEFGPGG, GIAAAMGKIGAFVGTWIFPAI, and VPFYLSSGLCIFSALLTFFLC.

It belongs to the major facilitator superfamily. Sugar transporter (TC 2.A.1.1) family.

It is found in the cell membrane. In terms of biological role, probable glycerophosphodiester transporter. Does not possess detectable glycerophosphoinositol (GroPIns) transport activity. Might be involved in the uptake of glycerophosphocholine (GroPCho). The expanded ability to utilize GroPIns and GroPCho results from the organism's pathogenic nature and its need to occupy a variety of environments within its host organism. This possibility is buttressed by the fact that GroPIns and GroPCho are present and abundant in human fluids. This is Glycerophosphodiester transporter GIT2 from Candida albicans (strain SC5314 / ATCC MYA-2876) (Yeast).